A 329-amino-acid chain; its full sequence is Probable tyrosine--tRNA ligase, cytoplasmic (329 aa).

Tyr35 serves as a coordination point for L-tyrosine. Positions 40–48 match the 'HIGH' region motif; it reads TTGKPHIAY. 4 residues coordinate L-tyrosine: Tyr162, Gln166, Asp169, and Gln184. A 'KMSKS' region motif is present at residues 218–222; that stretch reads KMSSS.

Belongs to the class-I aminoacyl-tRNA synthetase family. As to quaternary structure, homodimer.

It is found in the cytoplasm. It catalyses the reaction tRNA(Tyr) + L-tyrosine + ATP = L-tyrosyl-tRNA(Tyr) + AMP + diphosphate + H(+). The sequence is that of Probable tyrosine--tRNA ligase, cytoplasmic from Vairimorpha ceranae (strain BRL01) (Microsporidian parasite).